A 396-amino-acid chain; its full sequence is NADH-quinone oxidoreductase subunit D (396 aa).

The protein belongs to the complex I 49 kDa subunit family. In terms of assembly, NDH-1 is composed of 14 different subunits. Subunits NuoB, C, D, E, F, and G constitute the peripheral sector of the complex.

Its subcellular location is the cell inner membrane. The catalysed reaction is a quinone + NADH + 5 H(+)(in) = a quinol + NAD(+) + 4 H(+)(out). Functionally, NDH-1 shuttles electrons from NADH, via FMN and iron-sulfur (Fe-S) centers, to quinones in the respiratory chain. The immediate electron acceptor for the enzyme in this species is believed to be ubiquinone. Couples the redox reaction to proton translocation (for every two electrons transferred, four hydrogen ions are translocated across the cytoplasmic membrane), and thus conserves the redox energy in a proton gradient. In Bartonella bacilliformis (strain ATCC 35685 / KC583 / Herrer 020/F12,63), this protein is NADH-quinone oxidoreductase subunit D.